A 418-amino-acid chain; its full sequence is Tyrosine--tRNA ligase 1 (418 aa).

Residue Y34 coordinates L-tyrosine. The 'HIGH' region signature appears at 39-48 (PTGDSMHIGH). L-tyrosine is bound by residues Y166 and Q170. The short motif at 228 to 232 (KFGKT) is the 'KMSKS' region element. K231 contributes to the ATP binding site. Positions 350 to 416 (KNIVDWLVDT…GKKNYFLAKV (67 aa)) constitute an S4 RNA-binding domain.

This sequence belongs to the class-I aminoacyl-tRNA synthetase family. TyrS type 1 subfamily. Homodimer.

The protein resides in the cytoplasm. The catalysed reaction is tRNA(Tyr) + L-tyrosine + ATP = L-tyrosyl-tRNA(Tyr) + AMP + diphosphate + H(+). Functionally, catalyzes the attachment of tyrosine to tRNA(Tyr) in a two-step reaction: tyrosine is first activated by ATP to form Tyr-AMP and then transferred to the acceptor end of tRNA(Tyr). This chain is Tyrosine--tRNA ligase 1, found in Enterococcus faecalis (strain ATCC 700802 / V583).